The following is a 505-amino-acid chain: Deoxyguanosinetriphosphate triphosphohydrolase (505 aa).

An HD domain is found at 66–273; that stretch reads RLTHSMEVQQ…MEAADDISYC (208 aa).

The protein belongs to the dGTPase family. Type 1 subfamily. Homotetramer. Mg(2+) is required as a cofactor.

The catalysed reaction is dGTP + H2O = 2'-deoxyguanosine + triphosphate + H(+). Functionally, dGTPase preferentially hydrolyzes dGTP over the other canonical NTPs. In Salmonella enteritidis PT4 (strain P125109), this protein is Deoxyguanosinetriphosphate triphosphohydrolase.